Here is a 248-residue protein sequence, read N- to C-terminus: DNA polymerase sliding clamp (248 aa).

This sequence belongs to the PCNA family. As to quaternary structure, homotrimer. The subunits circularize to form a toroid; DNA passes through its center. Replication factor C (RFC) is required to load the toroid on the DNA.

In terms of biological role, sliding clamp subunit that acts as a moving platform for DNA processing. Responsible for tethering the catalytic subunit of DNA polymerase and other proteins to DNA during high-speed replication. In Cenarchaeum symbiosum (strain A), this protein is DNA polymerase sliding clamp.